The chain runs to 81 residues: Toxin-like peptide AaF1CA5 (81 aa).

Residues 1–22 (MMKLMLFSIIVILFSLIGSIHG) form the signal peptide. One can recognise an LCN-type CS-alpha/beta domain in the interval 25 to 81 (VPGNYPLDSSDDTYLCAPLGENPFCIKICRKHGVKYGLMLRLPCWCEYFGKIKNVKI). Disulfide bonds link cysteine 49–cysteine 68 and cysteine 53–cysteine 70.

The protein belongs to the long (3 C-C) scorpion toxin superfamily. In terms of tissue distribution, expressed by the venom gland.

The protein localises to the secreted. Its function is as follows. Probable neurotoxin that inhibits ion channels. The protein is Toxin-like peptide AaF1CA5 of Androctonus australis (Sahara scorpion).